The primary structure comprises 245 residues: Tyrosine recombinase XerD-like (245 aa).

The 72-residue stretch at 1 to 72 (MITFISKFLA…AVNQFLFFLY (72 aa)) folds into the Core-binding (CB) domain. Residues 90 to 245 (PLLTPAYQEV…PVTLEKYFKN (156 aa)) form the Tyr recombinase domain. Residues K151 and R210 contribute to the active site. Y242 (O-(3'-phospho-DNA)-tyrosine intermediate) is an active-site residue.

Belongs to the 'phage' integrase family. XerD-like subfamily.

The protein resides in the cytoplasm. In terms of biological role, putative tyrosine recombinase. Not involved in the cutting and rejoining of the recombining DNA molecules on dif(SL) site. In Streptococcus mutans serotype c (strain ATCC 700610 / UA159), this protein is Tyrosine recombinase XerD-like.